The sequence spans 91 residues: uncharacterized protein (91 aa).

This is an uncharacterized protein from Acidianus convivator (ABV).